Consider the following 147-residue polypeptide: MNSFRKTCAGALALIFGATSIVPTVAAPMNMDRPAINQNVIQARAHYRPQNYNRGHRPGYWHGHRGYRHYRHGYRRHNDGWWYPLAAFGAGAIIGGAISQPRPVYRAPAGSPHVQWCYSRYKSYRASDNTFQPYNGPRKQCRSPYSR.

Positions 1-26 are cleaved as a signal peptide; it reads MNSFRKTCAGALALIFGATSIVPTVA. A helical membrane pass occupies residues 80–100; the sequence is GWWYPLAAFGAGAIIGGAISQ.

This sequence belongs to the BA14k family.

It localises to the cell membrane. Functionally, has immunoglobulin-binding and hemagglutination properties, and can bind to mannose. Essential for virulence. May be involved in LPS biosynthesis or polysaccharide transport. This is Lectin-like protein BA14k from Brucella abortus (strain S19).